We begin with the raw amino-acid sequence, 332 residues long: 4-hydroxythreonine-4-phosphate dehydrogenase (332 aa).

Positions 136 and 137 each coordinate substrate. Residues His-166, His-211, and His-266 each contribute to the a divalent metal cation site. Positions 274, 283, and 292 each coordinate substrate.

The protein belongs to the PdxA family. As to quaternary structure, homodimer. It depends on Zn(2+) as a cofactor. Mg(2+) serves as cofactor. Co(2+) is required as a cofactor.

The protein localises to the cytoplasm. It catalyses the reaction 4-(phosphooxy)-L-threonine + NAD(+) = 3-amino-2-oxopropyl phosphate + CO2 + NADH. It participates in cofactor biosynthesis; pyridoxine 5'-phosphate biosynthesis; pyridoxine 5'-phosphate from D-erythrose 4-phosphate: step 4/5. Functionally, catalyzes the NAD(P)-dependent oxidation of 4-(phosphooxy)-L-threonine (HTP) into 2-amino-3-oxo-4-(phosphooxy)butyric acid which spontaneously decarboxylates to form 3-amino-2-oxopropyl phosphate (AHAP). The polypeptide is 4-hydroxythreonine-4-phosphate dehydrogenase (Wigglesworthia glossinidia brevipalpis).